We begin with the raw amino-acid sequence, 450 residues long: Bifunctional protein GlmU (450 aa).

Residues 1–229 form a pyrophosphorylase region; that stretch reads MRRHAIILAA…VEEIMGVNDR (229 aa). UDP-N-acetyl-alpha-D-glucosamine-binding positions include 8-11, Lys22, Gln72, and 77-78; these read LAAG and GT. Asp102 is a binding site for Mg(2+). Positions 139, 154, and 227 each coordinate UDP-N-acetyl-alpha-D-glucosamine. Asn227 lines the Mg(2+) pocket. The tract at residues 230-250 is linker; that stretch reads VMLSQAENAMQRRTNHYHMLN. Residues 251 to 450 are N-acetyltransferase; that stretch reads GVTIIDPDST…RQTTKEGYRK (200 aa). Positions 332 and 350 each coordinate UDP-N-acetyl-alpha-D-glucosamine. His362 acts as the Proton acceptor in catalysis. UDP-N-acetyl-alpha-D-glucosamine-binding residues include Tyr365 and Asn376. Acetyl-CoA is bound by residues 385-386, Ala422, and Arg439; that span reads NY.

It in the N-terminal section; belongs to the N-acetylglucosamine-1-phosphate uridyltransferase family. In the C-terminal section; belongs to the transferase hexapeptide repeat family. In terms of assembly, homotrimer. The cofactor is Mg(2+).

It localises to the cytoplasm. The catalysed reaction is alpha-D-glucosamine 1-phosphate + acetyl-CoA = N-acetyl-alpha-D-glucosamine 1-phosphate + CoA + H(+). It catalyses the reaction N-acetyl-alpha-D-glucosamine 1-phosphate + UTP + H(+) = UDP-N-acetyl-alpha-D-glucosamine + diphosphate. It functions in the pathway nucleotide-sugar biosynthesis; UDP-N-acetyl-alpha-D-glucosamine biosynthesis; N-acetyl-alpha-D-glucosamine 1-phosphate from alpha-D-glucosamine 6-phosphate (route II): step 2/2. Its pathway is nucleotide-sugar biosynthesis; UDP-N-acetyl-alpha-D-glucosamine biosynthesis; UDP-N-acetyl-alpha-D-glucosamine from N-acetyl-alpha-D-glucosamine 1-phosphate: step 1/1. It participates in bacterial outer membrane biogenesis; LPS lipid A biosynthesis. Catalyzes the last two sequential reactions in the de novo biosynthetic pathway for UDP-N-acetylglucosamine (UDP-GlcNAc). The C-terminal domain catalyzes the transfer of acetyl group from acetyl coenzyme A to glucosamine-1-phosphate (GlcN-1-P) to produce N-acetylglucosamine-1-phosphate (GlcNAc-1-P), which is converted into UDP-GlcNAc by the transfer of uridine 5-monophosphate (from uridine 5-triphosphate), a reaction catalyzed by the N-terminal domain. The protein is Bifunctional protein GlmU of Staphylococcus aureus (strain MRSA252).